Reading from the N-terminus, the 330-residue chain is Heat-inducible transcription repressor HrcA (330 aa).

The protein belongs to the HrcA family.

Negative regulator of class I heat shock genes (grpE-dnaK-dnaJ and groELS operons). Prevents heat-shock induction of these operons. In Synechococcus sp. (strain RCC307), this protein is Heat-inducible transcription repressor HrcA.